The sequence spans 193 residues: 5'RNA triphosphatase A449R (193 aa).

The cofactor is Mn(2+).

The enzyme catalyses a 5'-end triphospho-ribonucleoside in mRNA + H2O = a 5'-end diphospho-ribonucleoside in mRNA + phosphate + H(+). In terms of biological role, catalyzes the first stes of cap formation: by removing the gamma-phosphate from the 5'-triphosphate end of nascent mRNA to yield a diphosphate end. This is 5'RNA triphosphatase A449R (A449R) from Chlorella (PBCV-1).